Reading from the N-terminus, the 1076-residue chain is DNA-directed RNA polymerase subunit beta (1076 aa).

Belongs to the RNA polymerase beta chain family. As to quaternary structure, in plastids the minimal PEP RNA polymerase catalytic core is composed of four subunits: alpha, beta, beta', and beta''. When a (nuclear-encoded) sigma factor is associated with the core the holoenzyme is formed, which can initiate transcription.

It is found in the plastid. It localises to the chloroplast. It carries out the reaction RNA(n) + a ribonucleoside 5'-triphosphate = RNA(n+1) + diphosphate. In terms of biological role, DNA-dependent RNA polymerase catalyzes the transcription of DNA into RNA using the four ribonucleoside triphosphates as substrates. This is DNA-directed RNA polymerase subunit beta from Lolium perenne (Perennial ryegrass).